The primary structure comprises 346 residues: Small ribosomal subunit biogenesis GTPase RsgA 2 (346 aa).

The CP-type G domain occupies 93 to 248 (EEQLIAANFD…VIDTPGMREF (156 aa)). GTP contacts are provided by residues 138 to 141 (TKAD) and 190 to 198 (GSSGVGKSS). Zn(2+) is bound by residues C271, C276, H278, and C284.

The protein belongs to the TRAFAC class YlqF/YawG GTPase family. RsgA subfamily. Monomer. Associates with 30S ribosomal subunit, binds 16S rRNA. Zn(2+) is required as a cofactor.

It is found in the cytoplasm. Functionally, one of several proteins that assist in the late maturation steps of the functional core of the 30S ribosomal subunit. Helps release RbfA from mature subunits. May play a role in the assembly of ribosomal proteins into the subunit. Circularly permuted GTPase that catalyzes slow GTP hydrolysis, GTPase activity is stimulated by the 30S ribosomal subunit. The sequence is that of Small ribosomal subunit biogenesis GTPase RsgA 2 from Listeria monocytogenes serotype 4b (strain F2365).